The sequence spans 300 residues: RNA polymerase sigma factor RpoH (300 aa).

The sigma-70 factor domain-2 stretch occupies residues Leu53–Ser122. Residues Glu77 to Ser80 carry the Interaction with polymerase core subunit RpoC motif. A sigma-70 factor domain-4 region spans residues Ala231–Glu282. Residues Leu255–Val274 constitute a DNA-binding region (H-T-H motif).

The protein belongs to the sigma-70 factor family. RpoH subfamily. In terms of assembly, interacts with the RNA polymerase core enzyme.

Its subcellular location is the cytoplasm. Sigma factors are initiation factors that promote the attachment of RNA polymerase to specific initiation sites and are then released. This sigma factor is involved in regulation of expression of heat shock genes. This chain is RNA polymerase sigma factor RpoH, found in Rhizobium radiobacter (Agrobacterium tumefaciens).